The chain runs to 637 residues: Chaperone protein DnaK (637 aa).

Position 198 is a phosphothreonine; by autocatalysis (threonine 198). The tract at residues 600–637 is disordered; it reads IAQQQAQAQQAQGADAGAQSKDDDVVDAEFEEVKDDKK. Positions 601-618 are enriched in low complexity; it reads AQQQAQAQQAQGADAGAQ. Over residues 623–637 the composition is skewed to acidic residues; sequence DVVDAEFEEVKDDKK.

The protein belongs to the heat shock protein 70 family.

Functionally, acts as a chaperone. The chain is Chaperone protein DnaK from Vibrio parahaemolyticus serotype O3:K6 (strain RIMD 2210633).